Here is a 189-residue protein sequence, read N- to C-terminus: 3-isopropylmalate dehydratase small subunit (189 aa).

It belongs to the LeuD family. LeuD type 1 subfamily. Heterodimer of LeuC and LeuD.

It catalyses the reaction (2R,3S)-3-isopropylmalate = (2S)-2-isopropylmalate. It functions in the pathway amino-acid biosynthesis; L-leucine biosynthesis; L-leucine from 3-methyl-2-oxobutanoate: step 2/4. Functionally, catalyzes the isomerization between 2-isopropylmalate and 3-isopropylmalate, via the formation of 2-isopropylmaleate. The polypeptide is 3-isopropylmalate dehydratase small subunit (Staphylococcus epidermidis (strain ATCC 35984 / DSM 28319 / BCRC 17069 / CCUG 31568 / BM 3577 / RP62A)).